Consider the following 470-residue polypeptide: Probable citrate synthase, mitochondrial (470 aa).

Catalysis depends on residues His-297, His-351, and Asp-406.

Belongs to the citrate synthase family. In terms of assembly, homodimer.

It localises to the mitochondrion matrix. It carries out the reaction oxaloacetate + acetyl-CoA + H2O = citrate + CoA + H(+). It functions in the pathway carbohydrate metabolism; tricarboxylic acid cycle; isocitrate from oxaloacetate: step 1/2. This chain is Probable citrate synthase, mitochondrial, found in Leishmania braziliensis.